Here is a 510-residue protein sequence, read N- to C-terminus: Protein PLASTID TRANSCRIPTIONALLY ACTIVE 16, chloroplastic (510 aa).

Positions 1-14 (MASSSTSFPLTTAP) are enriched in polar residues. A chloroplast-targeting transit peptide spans 1-19 (MASSSTSFPLTTAPPQGVR). Disordered regions lie at residues 1-24 (MASS…NRRK) and 38-58 (LGKT…NPFQ). Residues 41-51 (TKGDDDSEGKQ) show a composition bias toward basic and acidic residues. 94-123 (IFVAGATGQAGIRIAQTLLQRGFSVRAGVP) is an NADP(+) binding site. Positions 354–403 (ARERAEEEAKVAADKAREAAEAAKEFEKQMQKLSEKEAEAASLAEDAQQK) form a coiled coil. A Phosphoserine modification is found at S395. Position 451 is a phosphothreonine; by STN7 (T451). The interval 453 to 493 (RGQAKARNLPPKKAVVKQRPSSPFASKPKEERPKKPEKEVR) is disordered. Over residues 479–493 (KPKEERPKKPEKEVR) the composition is skewed to basic and acidic residues.

The protein belongs to the NAD(P)-dependent epimerase/dehydratase family. In terms of assembly, component of the plastid transcriptionally active chromosome required for plastid gene expression. Interacts with DEGP1 under high light conditions and maybe its degradation target. Post-translationally, excluded from chloroplast nucleoid when phosphorylated on Thr-451 by STN7 that may regulate membrane-anchoring functions of the nucleoid.

The protein localises to the plastid. The protein resides in the chloroplast stroma. It is found in the chloroplast nucleoid. It localises to the chloroplast thylakoid membrane. In terms of biological role, probably involved in the regulation of plastid gene expression. This chain is Protein PLASTID TRANSCRIPTIONALLY ACTIVE 16, chloroplastic, found in Arabidopsis thaliana (Mouse-ear cress).